The following is a 289-amino-acid chain: Ribosomal RNA small subunit methyltransferase A (289 aa).

The S-adenosyl-L-methionine site is built by Asn21, Leu23, Gly48, Glu69, Asp94, and Asn120.

Belongs to the class I-like SAM-binding methyltransferase superfamily. rRNA adenine N(6)-methyltransferase family. RsmA subfamily.

It localises to the cytoplasm. It carries out the reaction adenosine(1518)/adenosine(1519) in 16S rRNA + 4 S-adenosyl-L-methionine = N(6)-dimethyladenosine(1518)/N(6)-dimethyladenosine(1519) in 16S rRNA + 4 S-adenosyl-L-homocysteine + 4 H(+). Functionally, specifically dimethylates two adjacent adenosines (A1518 and A1519) in the loop of a conserved hairpin near the 3'-end of 16S rRNA in the 30S particle. May play a critical role in biogenesis of 30S subunits. The polypeptide is Ribosomal RNA small subunit methyltransferase A (Haemophilus ducreyi (strain 35000HP / ATCC 700724)).